The following is a 321-amino-acid chain: MISMILLNITNSLLYILSILIAVAFLTLLERKLLGYMQHRKGPNLVGPMGLLQPIADGLKLITKEATKPTMSSPILFTLSPIMALILALTSWAPMPMPTPLTNMNLGLLFIMAMSGMFTYAILWSGWSSNSKYPLMGAMRAVAQIISYEVTLGLIIISMAILSGGYSLMLFTETQEHMWLLLSSWPLAMMWFTSTLAETNRSPFDLTEGESELVSGFNVEFSAGPFALLFLAEYTNILFMNTLSTMMFLNPGMTNPQLFTINLMTKTMILTTLFLWTRASYPRFRYDQLMHLLWKQYLPLTLAMYLLNTSTSMALCGTPPQ.

8 helical membrane passes run 9–29, 75–95, 106–126, 151–171, 177–197, 219–239, 256–276, and 297–317; these read ITNS…LTLL, ILFT…WAPM, LGLL…LWSG, TLGL…LMLF, HMWL…STLA, VEFS…NILF, PQLF…LFLW, and YLPL…ALCG.

The protein belongs to the complex I subunit 1 family.

The protein resides in the mitochondrion inner membrane. The enzyme catalyses a ubiquinone + NADH + 5 H(+)(in) = a ubiquinol + NAD(+) + 4 H(+)(out). Functionally, core subunit of the mitochondrial membrane respiratory chain NADH dehydrogenase (Complex I) that is believed to belong to the minimal assembly required for catalysis. Complex I functions in the transfer of electrons from NADH to the respiratory chain. The immediate electron acceptor for the enzyme is believed to be ubiquinone. This Lycodon semicarinatus (Ryukyu odd-tooth snake) protein is NADH-ubiquinone oxidoreductase chain 1 (MT-ND1).